The primary structure comprises 35 residues: Neurotoxin (35 aa).

Cystine bridges form between Cys-7–Cys-27, Cys-14–Cys-32, and Cys-18–Cys-34.

Expressed by the venom gland.

The protein localises to the secreted. Functionally, neurotoxin. Decreases the action potential of myelinated nerves in mice and frogs. In Buthus sp. (strain IY-2001) (Scorpion), this protein is Neurotoxin.